Reading from the N-terminus, the 764-residue chain is 5-methyltetrahydropteroyltriglutamate--homocysteine methyltransferase (764 aa).

Residues 16–19 (RELK) and lysine 112 contribute to the 5-methyltetrahydropteroyltri-L-glutamate site. L-homocysteine contacts are provided by residues 431 to 433 (IGS) and glutamate 484. L-methionine contacts are provided by residues 431–433 (IGS) and glutamate 484. Residues 515–516 (RC) and tryptophan 561 contribute to the 5-methyltetrahydropteroyltri-L-glutamate site. An L-homocysteine-binding site is contributed by aspartate 599. Aspartate 599 contacts L-methionine. Glutamate 605 is a binding site for 5-methyltetrahydropteroyltri-L-glutamate. The Zn(2+) site is built by histidine 641, cysteine 643, and glutamate 665. Histidine 694 serves as the catalytic Proton donor. Cysteine 726 is a binding site for Zn(2+).

This sequence belongs to the vitamin-B12 independent methionine synthase family. Zn(2+) is required as a cofactor.

The catalysed reaction is 5-methyltetrahydropteroyltri-L-glutamate + L-homocysteine = tetrahydropteroyltri-L-glutamate + L-methionine. The protein operates within amino-acid biosynthesis; L-methionine biosynthesis via de novo pathway; L-methionine from L-homocysteine (MetE route): step 1/1. Functionally, catalyzes the transfer of a methyl group from 5-methyltetrahydrofolate to homocysteine resulting in methionine formation. This is 5-methyltetrahydropteroyltriglutamate--homocysteine methyltransferase from Paraburkholderia phytofirmans (strain DSM 17436 / LMG 22146 / PsJN) (Burkholderia phytofirmans).